The sequence spans 152 residues: Holo-[acyl-carrier-protein] synthase (152 aa).

Mg(2+)-binding residues include aspartate 7 and glutamate 60.

Belongs to the P-Pant transferase superfamily. AcpS family. Requires Mg(2+) as cofactor.

It localises to the cytoplasm. The enzyme catalyses apo-[ACP] + CoA = holo-[ACP] + adenosine 3',5'-bisphosphate + H(+). Functionally, transfers the 4'-phosphopantetheine moiety from coenzyme A to a Ser of acyl-carrier-protein. The polypeptide is Holo-[acyl-carrier-protein] synthase (Bifidobacterium adolescentis (strain ATCC 15703 / DSM 20083 / NCTC 11814 / E194a)).